The primary structure comprises 334 residues: Holliday junction branch migration complex subunit RuvB (334 aa).

A large ATPase domain (RuvB-L) region spans residues 4-184 (ADRLIQPQLQ…FGIPLRLEFY (181 aa)). Residues R24, G65, K68, T69, T70, 131-133 (EDY), R174, Y184, and R221 contribute to the ATP site. T69 is a binding site for Mg(2+). Residues 185–255 (NVKDLSTIVT…VAEQALDLLD (71 aa)) form a small ATPAse domain (RuvB-S) region. The head domain (RuvB-H) stretch occupies residues 258–334 (GEGFDYMDRK…YLHFGMIKPE (77 aa)). Positions 294, 313, and 318 each coordinate DNA.

This sequence belongs to the RuvB family. In terms of assembly, homohexamer. Forms an RuvA(8)-RuvB(12)-Holliday junction (HJ) complex. HJ DNA is sandwiched between 2 RuvA tetramers; dsDNA enters through RuvA and exits via RuvB. An RuvB hexamer assembles on each DNA strand where it exits the tetramer. Each RuvB hexamer is contacted by two RuvA subunits (via domain III) on 2 adjacent RuvB subunits; this complex drives branch migration. In the full resolvosome a probable DNA-RuvA(4)-RuvB(12)-RuvC(2) complex forms which resolves the HJ.

Its subcellular location is the cytoplasm. The catalysed reaction is ATP + H2O = ADP + phosphate + H(+). Its function is as follows. The RuvA-RuvB-RuvC complex processes Holliday junction (HJ) DNA during genetic recombination and DNA repair, while the RuvA-RuvB complex plays an important role in the rescue of blocked DNA replication forks via replication fork reversal (RFR). RuvA specifically binds to HJ cruciform DNA, conferring on it an open structure. The RuvB hexamer acts as an ATP-dependent pump, pulling dsDNA into and through the RuvAB complex. RuvB forms 2 homohexamers on either side of HJ DNA bound by 1 or 2 RuvA tetramers; 4 subunits per hexamer contact DNA at a time. Coordinated motions by a converter formed by DNA-disengaged RuvB subunits stimulates ATP hydrolysis and nucleotide exchange. Immobilization of the converter enables RuvB to convert the ATP-contained energy into a lever motion, pulling 2 nucleotides of DNA out of the RuvA tetramer per ATP hydrolyzed, thus driving DNA branch migration. The RuvB motors rotate together with the DNA substrate, which together with the progressing nucleotide cycle form the mechanistic basis for DNA recombination by continuous HJ branch migration. Branch migration allows RuvC to scan DNA until it finds its consensus sequence, where it cleaves and resolves cruciform DNA. This chain is Holliday junction branch migration complex subunit RuvB, found in Shewanella sp. (strain ANA-3).